Reading from the N-terminus, the 111-residue chain is MAVKIRLARGGAKKRPFYRVVVANATAPRDGDFLEKVGTYDPMLASDNSERVVLKKDRIEYWLGTGAKPTERVAKFIEQAGVTLPEKVKKEMEVKAKNRKARLSKKEAKEA.

It belongs to the bacterial ribosomal protein bS16 family.

The sequence is that of Small ribosomal subunit protein bS16 from Rickettsia africae (strain ESF-5).